The sequence spans 170 residues: NADH-quinone oxidoreductase subunit B (170 aa).

Residues C37, C38, C102, and C131 each coordinate [4Fe-4S] cluster.

It belongs to the complex I 20 kDa subunit family. NDH-1 is composed of 14 different subunits. Subunits NuoB, C, D, E, F, and G constitute the peripheral sector of the complex. Requires [4Fe-4S] cluster as cofactor.

The protein localises to the cell inner membrane. The enzyme catalyses a quinone + NADH + 5 H(+)(in) = a quinol + NAD(+) + 4 H(+)(out). NDH-1 shuttles electrons from NADH, via FMN and iron-sulfur (Fe-S) centers, to quinones in the respiratory chain. The immediate electron acceptor for the enzyme in this species is believed to be ubiquinone. Couples the redox reaction to proton translocation (for every two electrons transferred, four hydrogen ions are translocated across the cytoplasmic membrane), and thus conserves the redox energy in a proton gradient. This Geotalea uraniireducens (strain Rf4) (Geobacter uraniireducens) protein is NADH-quinone oxidoreductase subunit B.